Consider the following 144-residue polypeptide: MQLNDLRSAPGARREKHRPGRGIGSGLGKTGGRGHKGLTSRSGGKVAPGFEGGQQPLHRRLPKFGFVSLKAMDRAEVRTSELAKVEGDVVSLQTLKDANLINQHVQRVKVMLSGEVGRAVTLKGIAATKGARAAIEAAGGKFED.

The interval 1–57 is disordered; it reads MQLNDLRSAPGARREKHRPGRGIGSGLGKTGGRGHKGLTSRSGGKVAPGFEGGQQPL. The segment covering 21-31 has biased composition (gly residues); the sequence is RGIGSGLGKTG.

The protein belongs to the universal ribosomal protein uL15 family. As to quaternary structure, part of the 50S ribosomal subunit.

Binds to the 23S rRNA. This Pseudomonas aeruginosa (strain LESB58) protein is Large ribosomal subunit protein uL15.